A 591-amino-acid chain; its full sequence is Frizzled and smoothened-like protein F (591 aa).

Residues methionine 1–glycine 17 form the signal peptide. Residues phenylalanine 18–lysine 244 are Extracellular-facing. The 148-residue stretch at isoleucine 30 to proline 177 folds into the FZ domain. 3 disulfide bridges follow: cysteine 35–cysteine 105, cysteine 48–cysteine 98, and cysteine 123–cysteine 174. Residues asparagine 167, asparagine 187, asparagine 202, and asparagine 230 are each glycosylated (N-linked (GlcNAc...) asparagine). The chain crosses the membrane as a helical span at residues isoleucine 245–asparagine 265. At lysine 266–threonine 275 the chain is on the cytoplasmic side. A helical membrane pass occupies residues cysteine 276 to glycine 296. Residues tyrosine 297–glycine 321 are Extracellular-facing. The chain crosses the membrane as a helical span at residues alanine 322–leucine 342. Residues tyrosine 343–lysine 353 are Cytoplasmic-facing. The chain crosses the membrane as a helical span at residues phenylalanine 354 to alanine 374. Over threonine 375 to serine 397 the chain is Extracellular. Residues leucine 398–isoleucine 418 form a helical membrane-spanning segment. Topologically, residues histidine 419–proline 442 are cytoplasmic. A helical transmembrane segment spans residues leucine 443–isoleucine 463. The Extracellular segment spans residues glutamate 464–serine 495. N-linked (GlcNAc...) asparagine glycosylation occurs at asparagine 483. Residues tyrosine 496–phenylalanine 516 form a helical membrane-spanning segment. Residues tyrosine 517–asparagine 591 are Cytoplasmic-facing. Residues serine 538–aspartate 571 are compositionally biased toward low complexity. The segment at serine 538–asparagine 573 is disordered.

The protein belongs to the G-protein coupled receptor Fz/Smo family.

Its subcellular location is the membrane. This chain is Frizzled and smoothened-like protein F (fslF), found in Dictyostelium discoideum (Social amoeba).